The primary structure comprises 523 residues: MLNVFGVSASMPDDSRSQKMGLLGAISYIVGNIVGSGIFITPTSIIENVNSVGLSLAIWILAAFISMLGSFCYVELGTSIRLSGGDFAYLCFMKWYPVAFAFMCIGCTINYPATLAVQAQTFAEYVFRGAGVELDETSEFWAKKLLGFSLIILLMFMNFFSLKTFVQRFSILASLAKIAATLLIIITGFYYLIFKHWKQNLEEPFKGSNWNPGPFVNALFAGLFSYDGWDILNFGAEEIENPKRTMPLSIIIGMTCIGVIYVAVNVAYSIVLSPTEMIASNAVAIDFANKTLGAAAFVVPVMVAILLIGSLNSTMFSASRYLQAVSRQGHIPSAISGIAPNCDSPRVALLVHILIAIAVSFLGDPDKLINYVAFAQWSQRAFTMSALLYLRIRGRPRHPDRIQLPIIMPILFFLVCTSMVVISIIDDFKSSAVGLGILLGGLIIFIIFVWDRALPSSHTFRNATHVINEESTKFMQIIFNVVPERVGDEEMKNAIGGAESESEKVPAYKISPTGNGQFKCTRM.

The Cytoplasmic segment spans residues 1–19 (MLNVFGVSASMPDDSRSQK). A helical membrane pass occupies residues 20–40 (MGLLGAISYIVGNIVGSGIFI). Residues 41–51 (TPTSIIENVNS) lie on the Extracellular side of the membrane. A helical transmembrane segment spans residues 52 to 72 (VGLSLAIWILAAFISMLGSFC). Residues 73 to 86 (YVELGTSIRLSGGD) are Cytoplasmic-facing. Residues 87–107 (FAYLCFMKWYPVAFAFMCIGC) traverse the membrane as a helical segment. The Extracellular portion of the chain corresponds to 108–145 (TINYPATLAVQAQTFAEYVFRGAGVELDETSEFWAKKL). Residues 146–166 (LGFSLIILLMFMNFFSLKTFV) traverse the membrane as a helical segment. The Cytoplasmic segment spans residues 167 to 173 (QRFSILA). Residues 174 to 194 (SLAKIAATLLIIITGFYYLIF) form a helical membrane-spanning segment. Topologically, residues 195-214 (KHWKQNLEEPFKGSNWNPGP) are extracellular. Residues 215–235 (FVNALFAGLFSYDGWDILNFG) traverse the membrane as a helical segment. The Cytoplasmic portion of the chain corresponds to 236 to 249 (AEEIENPKRTMPLS). The helical transmembrane segment at 250–270 (IIIGMTCIGVIYVAVNVAYSI) threads the bilayer. At 271–290 (VLSPTEMIASNAVAIDFANK) the chain is on the extracellular side. N289 carries N-linked (GlcNAc...) asparagine glycosylation. A helical transmembrane segment spans residues 291-311 (TLGAAAFVVPVMVAILLIGSL). Residues 312–348 (NSTMFSASRYLQAVSRQGHIPSAISGIAPNCDSPRVA) lie on the Cytoplasmic side of the membrane. Residues 349-369 (LLVHILIAIAVSFLGDPDKLI) traverse the membrane as a helical segment. Residues 370–404 (NYVAFAQWSQRAFTMSALLYLRIRGRPRHPDRIQL) are Extracellular-facing. A helical membrane pass occupies residues 405-425 (PIIMPILFFLVCTSMVVISII). Residues 426-429 (DDFK) lie on the Cytoplasmic side of the membrane. A helical membrane pass occupies residues 430–450 (SSAVGLGILLGGLIIFIIFVW). Residues 451-523 (DRALPSSHTF…GNGQFKCTRM (73 aa)) are Extracellular-facing. N-linked (GlcNAc...) asparagine glycosylation occurs at N462. The PDZ-binding motif motif lies at 521 to 523 (TRM).

This sequence belongs to the amino acid-polyamine-organocation (APC) superfamily. In terms of assembly, interacts (via PDZ-binding motif) with nfrl-1 (via PDZ 2 domain); the interaction with nrfl-1 is required to sequester aat-6 to the apical cell membrane of intestinal cells. Expressed at the apical cell membrane of intestinal cells.

It is found in the apical cell membrane. Its function is as follows. Amino acid transporter that mediates the uptake of the L-enantiomers of various amino acids, including L-glutamate. May play a role in promoting fertility. The polypeptide is Amino acid transporter protein 6 (Caenorhabditis elegans).